A 436-amino-acid polypeptide reads, in one-letter code: Trigger factor (436 aa).

Residues 161–246 (GDQVNIDFVG…VNSVAAPQLP (86 aa)) form the PPIase FKBP-type domain.

The protein belongs to the FKBP-type PPIase family. Tig subfamily.

The protein resides in the cytoplasm. The enzyme catalyses [protein]-peptidylproline (omega=180) = [protein]-peptidylproline (omega=0). In terms of biological role, involved in protein export. Acts as a chaperone by maintaining the newly synthesized protein in an open conformation. Functions as a peptidyl-prolyl cis-trans isomerase. The polypeptide is Trigger factor (Stutzerimonas stutzeri (strain A1501) (Pseudomonas stutzeri)).